A 510-amino-acid chain; its full sequence is Pentatricopeptide repeat-containing protein At1g71060, mitochondrial (510 aa).

The N-terminal 14 residues, 1–14 (MVFSRFFRVTGVNL), are a transit peptide targeting the mitochondrion. PPR repeat units lie at residues 127-157 (TTSN…MKAK), 161-195 (SKET…GFKM), 196-230 (ESSD…RFEP), 231-265 (DIKS…GFEP), 266-300 (DVVA…NCKP), 301-335 (SPHI…GFPL), 336-370 (EAPT…GVGP), 371-401 (NART…MSCE), 403-437 (TVST…GVLP), and 438-472 (GMHM…GIRP).

Belongs to the PPR family. P subfamily.

The protein resides in the mitochondrion. In Arabidopsis thaliana (Mouse-ear cress), this protein is Pentatricopeptide repeat-containing protein At1g71060, mitochondrial.